Here is a 177-residue protein sequence, read N- to C-terminus: Cytidylate kinase (177 aa).

Residue Gly8–Thr16 coordinates ATP.

This sequence belongs to the cytidylate kinase family. Type 2 subfamily.

It is found in the cytoplasm. It catalyses the reaction CMP + ATP = CDP + ADP. The catalysed reaction is dCMP + ATP = dCDP + ADP. This is Cytidylate kinase from Staphylothermus marinus (strain ATCC 43588 / DSM 3639 / JCM 9404 / F1).